The chain runs to 370 residues: Putative transposase InsL for insertion sequence element IS186A (370 aa).

The protein belongs to the transposase 11 family.

In terms of biological role, involved in the transposition of the insertion sequence IS186. The polypeptide is Putative transposase InsL for insertion sequence element IS186A (insL1) (Escherichia coli (strain K12)).